Consider the following 616-residue polypeptide: Zinc metalloproteinase-disintegrin-like protein H3 (616 aa).

An N-terminal signal peptide occupies residues 1–20 (MIQVLLVIICLAVFPYQGSS). Residues 21–193 (IILESGNVND…KKASQLNLTP (173 aa)) constitute a propeptide that is removed on maturation. Glu-194 is subject to Pyrrolidone carboxylic acid (Glu). The Peptidase M12B domain occupies 203 to 399 (KYIKLVIVAD…KMPQCILNKP (197 aa)). Intrachain disulfides connect Cys-314-Cys-394, Cys-354-Cys-378, and Cys-356-Cys-361. His-339 serves as a coordination point for Zn(2+). A Metal-binding motif is present at residues 339 to 350 (HEMGHNLGMDHD). The Proton acceptor role is filled by Glu-340. The Zn(2+) site is built by His-343 and His-349. An N-linked (GlcNAc...) asparagine glycan is attached at Asn-377. One can recognise a Disintegrin domain in the interval 407 to 493 (PAVCGNYLVE…ECPTDQFQRN (87 aa)). 5 residues coordinate Ca(2+): Val-409, Asn-412, Glu-416, Glu-419, and Asp-422. 14 disulfides stabilise this stretch: Cys-410-Cys-439, Cys-421-Cys-434, Cys-423-Cys-429, Cys-433-Cys-456, Cys-447-Cys-453, Cys-452-Cys-478, Cys-465-Cys-485, Cys-472-Cys-504, Cys-497-Cys-509, Cys-516-Cys-566, Cys-531-Cys-577, Cys-544-Cys-554, Cys-561-Cys-603, and Cys-597-Cys-609. Residues 471 to 473 (ECD) carry the D/ECD-tripeptide motif. Ca(2+) is bound by residues Asp-473, Asp-476, and Asp-488. N-linked (GlcNAc...) asparagine glycosylation is present at Asn-506.

It belongs to the venom metalloproteinase (M12B) family. P-III subfamily. P-IIIc sub-subfamily. In terms of assembly, homodimer; disulfide-linked. Requires Zn(2+) as cofactor. In terms of processing, N-glycosylated. Post-translationally, the N-terminus is blocked. In terms of tissue distribution, expressed by the venom gland (at protein level). Expressed by the venom gland.

Its subcellular location is the secreted. With respect to regulation, the proteolytic activity requires Zn(2+) and Ca(2+) ions. The alpha-fibrinogenase activity is completely inhibited by EDTA, but not by PMSF. Zinc metalloprotease that has fibrinogenolytic and hemorrhagic activities. Cleaves insulin B chain readily at '38-Ala-|-Leu-39' bond, and at a significantly slower rate, at '40-Tyr-|-Leu-41' bond. Hydrolyzes isolated extracellular matrix (ECM) bovine fibronectin, and basal membrane (BM) proteins human collagen IV and, to a lesser extent, murine laminin, in vitro. Cleaves murine nidogen (at '350-Ser-|-Phe-351' and '380-Tyr-|-Asn-381' bonds), but not laminin, in a solubilized BM preparation. Hydrolyzes plasma proteins involved in blood coagulation in vitro. It significantly prolongs thrombin time. Has potent alpha-fibrinogenase activity cleaving human fibrinogen alpha chain at '432-Lys-|-Leu-433' bond, but does not cleave beta or gamma chains. Hydrolyzes bovine prothrombin, but does not cleave it at '366-Arg-|-Ile-367' bond, which is necessary for the formation of active alpha-thrombin, however, the cleavage of fragment 1 from it leads to reduced alpha-thrombin formation. Hydrolyzes bovine factor X heavy chain at '211-Ser-|-Leu-212', '213-Asp-|-Leu-214' and '216-Gly-|-Leu-217' bonds activating it only marginally as does not cleave at the physiological activation site. Does not cleave factor X light chain. No hydrolysis or activation of plasminogen. The alpha-fibrinogenase activity likely contributes to its hemorrhagic activity, which in rat can be completely neutralized in vivo by anti-ammodytagin antibodies, which strongly cross-react with this protein. Has very weak collagen-, ADP- and ristocetin-induced platelet aggregation inhibition activity in vitro. The polypeptide is Zinc metalloproteinase-disintegrin-like protein H3 (Vipera ammodytes ammodytes (Western sand viper)).